The primary structure comprises 544 residues: Lipid II flippase MurJ (544 aa).

The next 14 membrane-spanning stretches (helical) occupy residues 21–41 (ILGM…GGAL), 49–69 (YTLF…KFVS), 90–110 (VMLV…PMFA), 127–147 (VVYV…MSLV), 169–189 (IVRI…FNGG), 191–211 (VIAV…GLVV), 241–261 (MFFE…AIPL), 297–317 (LVMI…PTIT), 338–358 (TILF…GPTY), 375–395 (ILLW…NAAI), 404–424 (FAVV…VPLI), 431–451 (GAIL…FIMI), 471–491 (VLSA…GFFI), and 500–520 (AAIV…YCGY).

The protein belongs to the polysaccharide synthase family.

Its subcellular location is the cell membrane. It participates in cell wall biogenesis; peptidoglycan biosynthesis. Its function is as follows. Involved in peptidoglycan biosynthesis. Transports lipid-linked peptidoglycan precursors from the inner to the outer leaflet of the cytoplasmic membrane. Not essential for growth. The chain is Lipid II flippase MurJ from Bacillus subtilis (strain 168).